A 175-amino-acid polypeptide reads, in one-letter code: Ribosome-binding factor A (175 aa).

Residues 129-175 form a disordered region; sequence GAKPAGEADPYRDRGSADEPSDAGGLVIRTSDGLEAENTGDDYQAED. Acidic residues predominate over residues 162-175; sequence LEAENTGDDYQAED.

This sequence belongs to the RbfA family. As to quaternary structure, monomer. Binds 30S ribosomal subunits, but not 50S ribosomal subunits or 70S ribosomes.

The protein resides in the cytoplasm. In terms of biological role, one of several proteins that assist in the late maturation steps of the functional core of the 30S ribosomal subunit. Associates with free 30S ribosomal subunits (but not with 30S subunits that are part of 70S ribosomes or polysomes). Required for efficient processing of 16S rRNA. May interact with the 5'-terminal helix region of 16S rRNA. The protein is Ribosome-binding factor A of Mycobacterium marinum (strain ATCC BAA-535 / M).